Here is a 585-residue protein sequence, read N- to C-terminus: Mycosin-5 (585 aa).

The signal sequence occupies residues 1 to 39; it reads MQRFGTGSSRSWCGRAGTATIAAVLLASGALTGLPPAYA. The 439-residue stretch at 83 to 521 folds into the Peptidase S8 domain; that stretch reads PKYMEMLNLN…YGVVDPVAAL (439 aa). Active-site charge relay system residues include aspartate 109 and histidine 141. Over residues 163–173 the composition is skewed to low complexity; sequence VPRRPVTIPTT. Positions 163 to 269 are disordered; that stretch reads VPRRPVTIPT…PALGPPPDAF (107 aa). Pro residues-rich tracts occupy residues 196 to 224 and 252 to 267; these read PAPP…PQPP and NPHP…PPPD. The active-site Charge relay system is serine 466. The helical transmembrane segment at 552-572 threads the bilayer; that stretch reads VPIWVAAGGLAGALLIGGAVF.

This sequence belongs to the peptidase S8 family.

It is found in the cell membrane. This Mycobacterium tuberculosis (strain ATCC 25618 / H37Rv) protein is Mycosin-5.